The primary structure comprises 456 residues: Adenylosuccinate lyase (456 aa).

N(6)-(1,2-dicarboxyethyl)-AMP is bound by residues 15–16 (RY), 90–92 (NHD), and 122–123 (TS). His-171 serves as the catalytic Proton donor/acceptor. Gln-247 provides a ligand contact to N(6)-(1,2-dicarboxyethyl)-AMP. The active-site Proton donor/acceptor is the Ser-295. N(6)-(1,2-dicarboxyethyl)-AMP is bound by residues Ser-296, 301–303 (KVN), Asn-309, Arg-335, and 340–344 (STVLR).

It belongs to the lyase 1 family. Adenylosuccinate lyase subfamily. As to quaternary structure, homotetramer. Residues from neighboring subunits contribute catalytic and substrate-binding residues to each active site.

It catalyses the reaction N(6)-(1,2-dicarboxyethyl)-AMP = fumarate + AMP. It carries out the reaction (2S)-2-[5-amino-1-(5-phospho-beta-D-ribosyl)imidazole-4-carboxamido]succinate = 5-amino-1-(5-phospho-beta-D-ribosyl)imidazole-4-carboxamide + fumarate. Its pathway is purine metabolism; AMP biosynthesis via de novo pathway; AMP from IMP: step 2/2. The protein operates within purine metabolism; IMP biosynthesis via de novo pathway; 5-amino-1-(5-phospho-D-ribosyl)imidazole-4-carboxamide from 5-amino-1-(5-phospho-D-ribosyl)imidazole-4-carboxylate: step 2/2. Functionally, catalyzes two reactions in de novo purine nucleotide biosynthesis. Catalyzes the breakdown of 5-aminoimidazole- (N-succinylocarboxamide) ribotide (SAICAR or 2-[5-amino-1-(5-phospho-beta-D-ribosyl)imidazole-4-carboxamido]succinate) to 5-aminoimidazole-4-carboxamide ribotide (AICAR or 5-amino-1-(5-phospho-beta-D-ribosyl)imidazole-4-carboxamide) and fumarate, and of adenylosuccinate (ADS or N(6)-(1,2-dicarboxyethyl)-AMP) to adenosine monophosphate (AMP) and fumarate. This is Adenylosuccinate lyase (purB) from Legionella pneumophila subsp. pneumophila (strain Philadelphia 1 / ATCC 33152 / DSM 7513).